A 169-amino-acid polypeptide reads, in one-letter code: MGDLSTTILAAEEGGGGNFLVPNGTFFFVLLIFLIVLGVIAKWVVPPISKVLQEREAMVTKTVEDNRKAADLFAAAQGDSQQVMAKARREASGIRDEARGEGRKILEDMRSRASAESAATLQKTNEELSRQGQQTAAELQSSIETLSATLASRVLGVDISSAAATSQGR.

A helical membrane pass occupies residues 26–46; sequence FFFVLLIFLIVLGVIAKWVVP.

The protein belongs to the ATPase B chain family. In terms of assembly, F-type ATPases have 2 components, F(1) - the catalytic core - and F(0) - the membrane proton channel. F(1) has five subunits: alpha(3), beta(3), gamma(1), delta(1), epsilon(1). F(0) has three main subunits: a(1), b(2) and c(10-14). The alpha and beta chains form an alternating ring which encloses part of the gamma chain. F(1) is attached to F(0) by a central stalk formed by the gamma and epsilon chains, while a peripheral stalk is formed by the delta and b chains.

It localises to the cell membrane. F(1)F(0) ATP synthase produces ATP from ADP in the presence of a proton or sodium gradient. F-type ATPases consist of two structural domains, F(1) containing the extramembraneous catalytic core and F(0) containing the membrane proton channel, linked together by a central stalk and a peripheral stalk. During catalysis, ATP synthesis in the catalytic domain of F(1) is coupled via a rotary mechanism of the central stalk subunits to proton translocation. Its function is as follows. Component of the F(0) channel, it forms part of the peripheral stalk, linking F(1) to F(0). This is ATP synthase subunit b from Mycobacterium sp. (strain JLS).